The following is a 97-amino-acid chain: Citrate lyase acyl carrier protein (97 aa).

Serine 14 is subject to O-(phosphoribosyl dephospho-coenzyme A)serine.

Belongs to the CitD family. In terms of assembly, oligomer with a subunit composition of (alpha,beta,gamma)6.

The protein localises to the cytoplasm. Covalent carrier of the coenzyme of citrate lyase. The polypeptide is Citrate lyase acyl carrier protein (Lactobacillus acidophilus (strain ATCC 700396 / NCK56 / N2 / NCFM)).